Consider the following 85-residue polypeptide: Putative membrane protein insertion efficiency factor (85 aa).

It belongs to the UPF0161 family.

The protein localises to the cell membrane. Its function is as follows. Could be involved in insertion of integral membrane proteins into the membrane. In terms of biological role, lyses fish blood cells. In Aeromonas hydrophila, this protein is Putative membrane protein insertion efficiency factor (hlyA).